A 217-amino-acid chain; its full sequence is UPF0502 protein VFMJ11_A0613 (217 aa).

This sequence belongs to the UPF0502 family.

This chain is UPF0502 protein VFMJ11_A0613, found in Aliivibrio fischeri (strain MJ11) (Vibrio fischeri).